We begin with the raw amino-acid sequence, 228 residues long: Adapter protein MecA (228 aa).

Positions 79–98 (GQKNDDSAADQTDDEGTDTQ) are disordered. A compositionally biased stretch (acidic residues) spans 85-95 (SAADQTDDEGT).

Belongs to the MecA family. As to quaternary structure, homodimer.

In terms of biological role, enables the recognition and targeting of unfolded and aggregated proteins to the ClpC protease or to other proteins involved in proteolysis. This Lacticaseibacillus casei (strain BL23) (Lactobacillus casei) protein is Adapter protein MecA.